Reading from the N-terminus, the 111-residue chain is Short neuropeptide F (111 aa).

A signal peptide spans 1 to 24 (MSAMYAKRCAALVLLVVTVGLVNA). Residues 25 to 76 (TENYMDYGEEMAEKTPAENIHELYRLLLQRNTLDNAGFGGIPLEHLMIRKSQ) constitute a propeptide that is removed on maturation. Phenylalanine 85 is subject to Phenylalanine amide. Residues 88–111 (SGPHVSARALPRPMGAVAGYDDNN) constitute a propeptide that is removed on maturation.

As to expression, expressed throughout the central nervous system (at protein level).

Its subcellular location is the secreted. Functionally, plays a role in controlling food intake and regulating body size. This Camponotus floridanus (Florida carpenter ant) protein is Short neuropeptide F.